We begin with the raw amino-acid sequence, 530 residues long: T-complex protein 1 subunit zeta-2 (530 aa).

It belongs to the TCP-1 chaperonin family. Component of the chaperonin-containing T-complex (TRiC), a heterooligomeric complex of about 850 to 900 kDa that forms two stacked rings, 12 to 16 nm in diameter. As to expression, testis-specific.

The protein resides in the cytoplasm. Component of the chaperonin-containing T-complex (TRiC), a molecular chaperone complex that assists the folding of proteins upon ATP hydrolysis. The polypeptide is T-complex protein 1 subunit zeta-2 (CCT6B) (Homo sapiens (Human)).